Reading from the N-terminus, the 515-residue chain is Methionine--tRNA ligase (515 aa).

The short motif at 13-23 (AYPNGKPHIGH) is the 'HIGH' region element. Positions 300-304 (KMSKS) match the 'KMSKS' region motif. Residue lysine 303 coordinates ATP.

This sequence belongs to the class-I aminoacyl-tRNA synthetase family. MetG type 2B subfamily. As to quaternary structure, monomer.

The protein localises to the cytoplasm. The catalysed reaction is tRNA(Met) + L-methionine + ATP = L-methionyl-tRNA(Met) + AMP + diphosphate. Functionally, is required not only for elongation of protein synthesis but also for the initiation of all mRNA translation through initiator tRNA(fMet) aminoacylation. The sequence is that of Methionine--tRNA ligase from Brucella melitensis biotype 1 (strain ATCC 23456 / CCUG 17765 / NCTC 10094 / 16M).